The sequence spans 681 residues: Dipeptidyl carboxypeptidase (681 aa).

H470 serves as a coordination point for Zn(2+). Residue E471 is part of the active site. 2 residues coordinate Zn(2+): H474 and H477.

This sequence belongs to the peptidase M3 family. Zn(2+) serves as cofactor.

It is found in the cytoplasm. The catalysed reaction is Hydrolysis of unblocked, C-terminal dipeptides from oligopeptides, with broad specificity. Does not hydrolyze bonds in which P1' is Pro, or both P1 and P1' are Gly.. Stimulated by Mn(2+), Mg(2+), Co(2+) and Ca(2+), inhibited by Cu(2+), Ni(2+), Zn(2+), chymostatin and 1,10-phenanthroline. Functionally, removes dipeptides from the C-termini of N-blocked tripeptides, tetrapeptides and larger peptides. The chain is Dipeptidyl carboxypeptidase from Escherichia coli (strain K12).